A 368-amino-acid polypeptide reads, in one-letter code: F-box only protein 28 (368 aa).

Positions 1-11 (MAAASEERMAE) are enriched in basic and acidic residues. A disordered region spans residues 1 to 57 (MAAASEERMAEEGGGGHGDGGSPSAIASTQRLPPPPPPQPPQPGSQAPPAPALAPDQ). A compositionally biased stretch (gly residues) spans 12–21 (EGGGGHGDGG). Residues 32–52 (LPPPPPPQPPQPGSQAPPAPA) are compositionally biased toward pro residues. Residues 61–109 (NNTLVALPIVAIENILSFMSYDEISQLRLVCKRMDLVCQRMLNQGFLKV) enclose the F-box domain. Phosphoserine is present on residues Ser235 and Ser242. The residue at position 270 (Thr270) is a Phosphothreonine. Residues 328 to 368 (MESAVGNSSGSGQSEESPRKRKKAAEAIDSLRKSKRLRNRK) are disordered. Position 344 is a phosphoserine (Ser344).

As to quaternary structure, part of a SCF (SKP1-cullin-F-box) protein ligase complex.

The protein localises to the chromosome. It localises to the centromere. It is found in the kinetochore. Probably recognizes and binds to some phosphorylated proteins and promotes their ubiquitination and degradation. This is F-box only protein 28 (FBXO28) from Bos taurus (Bovine).